A 377-amino-acid chain; its full sequence is Putative glutamate--cysteine ligase 2 (377 aa).

Belongs to the glutamate--cysteine ligase type 2 family. YbdK subfamily.

It carries out the reaction L-cysteine + L-glutamate + ATP = gamma-L-glutamyl-L-cysteine + ADP + phosphate + H(+). In terms of biological role, ATP-dependent carboxylate-amine ligase which exhibits weak glutamate--cysteine ligase activity. The protein is Putative glutamate--cysteine ligase 2 of Pseudomonas aeruginosa (strain LESB58).